A 160-amino-acid chain; its full sequence is Small ribosomal subunit protein uS7 (160 aa).

This sequence belongs to the universal ribosomal protein uS7 family. Part of the 30S ribosomal subunit. Contacts proteins S9 and S11.

In terms of biological role, one of the primary rRNA binding proteins, it binds directly to 16S rRNA where it nucleates assembly of the head domain of the 30S subunit. Is located at the subunit interface close to the decoding center, probably blocks exit of the E-site tRNA. This is Small ribosomal subunit protein uS7 from Ehrlichia canis (strain Jake).